We begin with the raw amino-acid sequence, 278 residues long: Large ribosomal subunit protein uL2 (278 aa).

Disordered stretches follow at residues 27–57 and 224–278; these read STPE…QGGG and VAMN…NKKR. Residues 258–278 show a composition bias toward basic residues; that stretch reads RSPKKASSKYIVRRRKTNKKR.

It belongs to the universal ribosomal protein uL2 family. As to quaternary structure, part of the 50S ribosomal subunit. Forms a bridge to the 30S subunit in the 70S ribosome.

Functionally, one of the primary rRNA binding proteins. Required for association of the 30S and 50S subunits to form the 70S ribosome, for tRNA binding and peptide bond formation. It has been suggested to have peptidyltransferase activity; this is somewhat controversial. Makes several contacts with the 16S rRNA in the 70S ribosome. In Streptomyces avermitilis (strain ATCC 31267 / DSM 46492 / JCM 5070 / NBRC 14893 / NCIMB 12804 / NRRL 8165 / MA-4680), this protein is Large ribosomal subunit protein uL2.